A 2250-amino-acid polypeptide reads, in one-letter code: DNA polymerase epsilon catalytic subunit A (2250 aa).

Disordered stretches follow at residues M1–A63, N235–P259, and P1990–S2010. Positions G32–A41 are enriched in gly residues. Positions D249 to P259 are enriched in basic and acidic residues. A compositionally biased stretch (polar residues) spans P1990 to P2000. Zn(2+)-binding residues include C2118, C2121, C2156, and C2159. The CysA-type zinc finger occupies C2118 to C2159. C2190, C2193, C2205, and C2207 together coordinate [4Fe-4S] cluster. The CysB motif signature appears at C2190–C2207.

Belongs to the DNA polymerase type-B family. As to quaternary structure, heterotetramer. Consists of 4 subunits: POL2, DPB2, DPB3 and DPB4. [4Fe-4S] cluster serves as cofactor.

It localises to the nucleus. The enzyme catalyses DNA(n) + a 2'-deoxyribonucleoside 5'-triphosphate = DNA(n+1) + diphosphate. In terms of biological role, DNA polymerase II participates in chromosomal DNA replication. The polypeptide is DNA polymerase epsilon catalytic subunit A (POL2) (Cryptococcus neoformans var. neoformans serotype D (strain JEC21 / ATCC MYA-565) (Filobasidiella neoformans)).